The primary structure comprises 621 residues: Zinc metalloproteinase-disintegrin-like TSV-DM (621 aa).

The N-terminal stretch at 1 to 20 (MIQVLLVTICLAVFPYQGSS) is a signal peptide. A propeptide spanning residues 21-191 (IILESGNVND…EASQSNLTPE (171 aa)) is cleaved from the precursor. Glutamine 192 bears the Pyrrolidone carboxylic acid mark. One can recognise a Peptidase M12B domain in the interval 200–396 (KYVKFFLVAD…NMPQCILKKP (197 aa)). N-linked (GlcNAc...) asparagine glycosylation occurs at asparagine 219. Cystine bridges form between cysteine 311-cysteine 391, cysteine 351-cysteine 375, and cysteine 353-cysteine 358. A Zn(2+)-binding site is contributed by histidine 336. Glutamate 337 is a catalytic residue. Histidine 340 and histidine 346 together coordinate Zn(2+). One can recognise a Disintegrin domain in the interval 404–489 (PPVCGNYFVE…AECTDRFQRN (86 aa)). Ca(2+)-binding residues include valine 406, asparagine 409, phenylalanine 411, glutamate 413, glutamate 416, and aspartate 419. 14 disulfides stabilise this stretch: cysteine 407-cysteine 436, cysteine 418-cysteine 431, cysteine 420-cysteine 426, cysteine 430-cysteine 453, cysteine 444-cysteine 450, cysteine 449-cysteine 475, cysteine 462-cysteine 482, cysteine 469-cysteine 500, cysteine 493-cysteine 505, cysteine 512-cysteine 562, cysteine 527-cysteine 573, cysteine 540-cysteine 550, cysteine 557-cysteine 599, and cysteine 593-cysteine 605. The D/ECD-tripeptide motif lies at 468-470 (ECD). Ca(2+) is bound by residues aspartate 470, methionine 471, aspartate 473, aspartate 484, and arginine 485. The N-linked (GlcNAc...) asparagine glycan is linked to asparagine 502.

This sequence belongs to the venom metalloproteinase (M12B) family. P-III subfamily. P-IIIc sub-subfamily. As to quaternary structure, homodimer; disulfide-linked. Zn(2+) serves as cofactor. Post-translationally, the N-terminus is blocked. As to expression, expressed by the venom gland.

The protein resides in the secreted. Inhibited by EDTA and DTT, and partially inhibited by EGTA, but not inhibited by PMSF and NEM. Snake venom zinc metalloprotease that hydrolyzes the alpha-chain (FGA) and more slowly the beta-chain (FGB) of fibrinogen. Inhibits cell proliferation and induces cell morphologic changes transiently on human umbilical vein endothelial cells. This chain is Zinc metalloproteinase-disintegrin-like TSV-DM, found in Trimeresurus stejnegeri (Chinese green tree viper).